Reading from the N-terminus, the 387-residue chain is F-box/LRR-repeat/kelch-repeat protein At2g29770 (387 aa).

Residues 1–34 (MVFISETSDDGSNGGDPTKNPQEEEEENLPPIPQ) form a disordered region. One can recognise an F-box domain in the interval 31 to 78 (PIPQGIPDELIESTVLLIRRCHYPTLSLLSKTFRRVISSSELYKSRFI). The stretch at 105 to 128 (CNIPRNISLHLREIKSLPPLNHGS) is one LRR 1 repeat. Kelch repeat units follow at residues 136–183 (HMYV…VIDG) and 184–231 (RIYV…FVTS). An LRR 2 repeat occupies 196 to 219 (DHWIEVFDIENRIWSSVPHHRYCN).

The sequence is that of F-box/LRR-repeat/kelch-repeat protein At2g29770 from Arabidopsis thaliana (Mouse-ear cress).